A 566-amino-acid polypeptide reads, in one-letter code: Membrane protein insertase YidC (566 aa).

5 helical membrane-spanning segments follow: residues 3 to 23 (IKRI…FNAW), 346 to 366 (GWLW…HAVV), 369 to 389 (WGWS…WFSA), 436 to 456 (GGCL…YVII), and 509 to 529 (MWIL…GLVL).

It belongs to the OXA1/ALB3/YidC family. Type 1 subfamily. Interacts with the Sec translocase complex via SecD. Specifically interacts with transmembrane segments of nascent integral membrane proteins during membrane integration.

It is found in the cell inner membrane. Required for the insertion and/or proper folding and/or complex formation of integral membrane proteins into the membrane. Involved in integration of membrane proteins that insert both dependently and independently of the Sec translocase complex, as well as at least some lipoproteins. Aids folding of multispanning membrane proteins. The polypeptide is Membrane protein insertase YidC (Coxiella burnetii (strain CbuK_Q154) (Coxiella burnetii (strain Q154))).